Consider the following 141-residue polypeptide: Large ribosomal subunit protein uL11c (141 aa).

Belongs to the universal ribosomal protein uL11 family. Part of the ribosomal stalk of the 50S ribosomal subunit. Interacts with L10 and the large rRNA to form the base of the stalk. L10 forms an elongated spine to which L12 dimers bind in a sequential fashion forming a multimeric L10(L12)X complex.

The protein localises to the plastid. Its subcellular location is the chloroplast. Its function is as follows. Forms part of the ribosomal stalk which helps the ribosome interact with GTP-bound translation factors. The sequence is that of Large ribosomal subunit protein uL11c from Trieres chinensis (Marine centric diatom).